A 157-amino-acid chain; its full sequence is S-ribosylhomocysteine lyase (157 aa).

Positions 54, 58, and 126 each coordinate Fe cation.

Belongs to the LuxS family. As to quaternary structure, homodimer. Requires Fe cation as cofactor.

It catalyses the reaction S-(5-deoxy-D-ribos-5-yl)-L-homocysteine = (S)-4,5-dihydroxypentane-2,3-dione + L-homocysteine. Functionally, involved in the synthesis of autoinducer 2 (AI-2) which is secreted by bacteria and is used to communicate both the cell density and the metabolic potential of the environment. The regulation of gene expression in response to changes in cell density is called quorum sensing. Catalyzes the transformation of S-ribosylhomocysteine (RHC) to homocysteine (HC) and 4,5-dihydroxy-2,3-pentadione (DPD). The polypeptide is S-ribosylhomocysteine lyase (Bacillus pumilus (strain SAFR-032)).